Reading from the N-terminus, the 231-residue chain is Uracil-DNA glycosylase (231 aa).

Asp70 (proton acceptor) is an active-site residue.

The protein belongs to the uracil-DNA glycosylase (UDG) superfamily. UNG family.

The protein localises to the cytoplasm. It carries out the reaction Hydrolyzes single-stranded DNA or mismatched double-stranded DNA and polynucleotides, releasing free uracil.. Functionally, excises uracil residues from the DNA which can arise as a result of misincorporation of dUMP residues by DNA polymerase or due to deamination of cytosine. This is Uracil-DNA glycosylase from Campylobacter curvus (strain 525.92).